A 328-amino-acid polypeptide reads, in one-letter code: GTP 3',8-cyclase (328 aa).

Positions 9 to 229 (GFGRDVRYLR…DNGLNTGGPA (221 aa)) constitute a Radical SAM core domain. GTP is bound at residue Arg18. Residues Cys25 and Cys29 each contribute to the [4Fe-4S] cluster site. An S-adenosyl-L-methionine-binding site is contributed by Tyr31. Cys32 contributes to the [4Fe-4S] cluster binding site. Position 60 (Arg60) interacts with GTP. Gly64 contributes to the S-adenosyl-L-methionine binding site. A GTP-binding site is contributed by Thr94. Position 118 (Ser118) interacts with S-adenosyl-L-methionine. Lys154 provides a ligand contact to GTP. An S-adenosyl-L-methionine-binding site is contributed by Met188. Positions 252 and 255 each coordinate [4Fe-4S] cluster. A GTP-binding site is contributed by 257–259 (RVR). Cys269 is a [4Fe-4S] cluster binding site.

Belongs to the radical SAM superfamily. MoaA family. In terms of assembly, monomer and homodimer. Requires [4Fe-4S] cluster as cofactor.

It carries out the reaction GTP + AH2 + S-adenosyl-L-methionine = (8S)-3',8-cyclo-7,8-dihydroguanosine 5'-triphosphate + 5'-deoxyadenosine + L-methionine + A + H(+). The protein operates within cofactor biosynthesis; molybdopterin biosynthesis. Functionally, catalyzes the cyclization of GTP to (8S)-3',8-cyclo-7,8-dihydroguanosine 5'-triphosphate. The sequence is that of GTP 3',8-cyclase from Rhodobacter capsulatus (Rhodopseudomonas capsulata).